The following is a 163-amino-acid chain: Nucleotide-binding protein Dhaf_3127 (163 aa).

The protein belongs to the YajQ family.

Nucleotide-binding protein. The protein is Nucleotide-binding protein Dhaf_3127 of Desulfitobacterium hafniense (strain DSM 10664 / DCB-2).